The chain runs to 454 residues: MLLAQRRLFSLGCRAKPIKTIYSSKVLGLSTSAKMALRFKNAKRIEGLDQNVWVEFTKLAADPSVVNLGQGFPDITLPSYVQEELSKAAFIDNLNQYTRGFGHPSLVKALSCLYGKIYQKQIDPNEEILVTVGGYGSLFNAIQGLVDPGDEVIIMVPFYDCYEPMVKMAGAVPVFIPLRSKRTDGMKWTSSDWTFNPQELESKFSSKTKAIILNTPHNPIGKVYTREELQVIADLCIKHDTLCISDEVYEWLVYTGHKHIKVASLPGMWDRTLTIGSAGKTFSVTGWKLGWSIGPGHLIKHLRTVQQTSVYTCATPLQAALAEAFWIDIKRMDDPECYFNSLPKELEVKRDRMACLLNSVGLKPIIPDGGYFIIADVSSLGVDLSDVKSDEPYDYKFVKWMTKNKKLSAIPVSAFCDSESKPHFEKLVRFCFIKKDSTLDAAEEIFRTWNSRKS.

Residue G71 coordinates substrate. K116 carries the post-translational modification N6-acetyllysine; alternate. An N6-succinyllysine; alternate modification is found at K116. N218 is a substrate binding site. K280 carries the N6-(pyridoxal phosphate)lysine modification. Residue R429 participates in substrate binding.

It belongs to the class-I pyridoxal-phosphate-dependent aminotransferase family. As to quaternary structure, homodimer. Requires pyridoxal 5'-phosphate as cofactor.

It carries out the reaction L-kynurenine + 2-oxoglutarate = kynurenate + L-glutamate + H2O. It catalyses the reaction L-kynurenine + glyoxylate = kynurenate + glycine + H2O. The enzyme catalyses 3-hydroxy-L-kynurenine + glyoxylate = xanthurenate + glycine + H2O. The catalysed reaction is an S-substituted L-cysteine + H2O = a thiol + pyruvate + NH4(+). It participates in amino-acid degradation; L-kynurenine degradation; kynurenate from L-kynurenine: step 1/2. Its function is as follows. Catalyzes the irreversible transamination of the L-tryptophan metabolite L-kynurenine to form kynurenic acid (KA), an intermediate in the tryptophan catabolic pathway which is also a broad spectrum antagonist of the three ionotropic excitatory amino acid receptors among others. May catalyze the beta-elimination of S-conjugates and Se-conjugates of L-(seleno)cysteine, resulting in the cleavage of the C-S or C-Se bond. Has transaminase activity towards L-kynurenine, tryptophan, phenylalanine, serine, cysteine, methionine, histidine, glutamine and asparagine with glyoxylate as an amino group acceptor (in vitro). Has lower activity with 2-oxoglutarate as amino group acceptor (in vitro). This chain is Kynurenine--oxoglutarate transaminase 3, found in Rattus norvegicus (Rat).